A 260-amino-acid chain; its full sequence is Shikimate dehydrogenase (260 aa).

The active-site Proton acceptor is the lysine 71. NADP(+) is bound at residue 124–128 (GAGGA).

This sequence belongs to the shikimate dehydrogenase family.

It catalyses the reaction shikimate + NADP(+) = 3-dehydroshikimate + NADPH + H(+). The protein operates within metabolic intermediate biosynthesis; chorismate biosynthesis; chorismate from D-erythrose 4-phosphate and phosphoenolpyruvate: step 4/7. The chain is Shikimate dehydrogenase (aroE) from Sulfurisphaera tokodaii (strain DSM 16993 / JCM 10545 / NBRC 100140 / 7) (Sulfolobus tokodaii).